The following is a 553-amino-acid chain: Undecaprenyl phosphate-alpha-4-amino-4-deoxy-L-arabinose arabinosyl transferase (553 aa).

The next 12 membrane-spanning stretches (helical) occupy residues 8–28, 83–103, 111–131, 132–152, 176–196, 204–224, 255–275, 288–308, 317–337, 350–370, 380–400, and 407–427; these read LVLL…RALW, VRFG…WLAF, VAVL…VGTY, AVLD…FWLG, VMTK…PWVI, VLLF…PWAL, APFW…VALL, IESG…FFSI, ILPC…QLVA, TVFG…WGIA, VLKV…GYLT, and LWQW…GMIP.

Belongs to the glycosyltransferase 83 family.

The protein localises to the cell inner membrane. The enzyme catalyses 4-amino-4-deoxy-alpha-L-arabinopyranosyl di-trans,octa-cis-undecaprenyl phosphate + lipid IVA = lipid IIA + di-trans,octa-cis-undecaprenyl phosphate.. The protein operates within lipopolysaccharide metabolism; 4-amino-4-deoxy-beta-L-arabinose-lipid A biosynthesis. Catalyzes the transfer of the L-Ara4N moiety of the glycolipid undecaprenyl phosphate-alpha-L-Ara4N to lipid A. The modified arabinose is attached to lipid A and is required for resistance to polymyxin and cationic antimicrobial peptides. This chain is Undecaprenyl phosphate-alpha-4-amino-4-deoxy-L-arabinose arabinosyl transferase, found in Enterobacter sp. (strain 638).